The chain runs to 346 residues: Protein-glutamate methylesterase/protein-glutamine glutaminase (346 aa).

Residues 6-123 (KVLVVDDSAF…SLDLEKVRDL (118 aa)) enclose the Response regulatory domain. 4-aspartylphosphate is present on D57. Residues 155–346 (PFDKTIIVIG…ADSIVRQCKR (192 aa)) form the CheB-type methylesterase domain. Catalysis depends on residues S166, H193, and D289.

Belongs to the CheB family. In terms of processing, phosphorylated by CheA. Phosphorylation of the N-terminal regulatory domain activates the methylesterase activity.

It localises to the cytoplasm. It catalyses the reaction [protein]-L-glutamate 5-O-methyl ester + H2O = L-glutamyl-[protein] + methanol + H(+). The catalysed reaction is L-glutaminyl-[protein] + H2O = L-glutamyl-[protein] + NH4(+). Its function is as follows. Involved in chemotaxis. Part of a chemotaxis signal transduction system that modulates chemotaxis in response to various stimuli. Catalyzes the demethylation of specific methylglutamate residues introduced into the chemoreceptors (methyl-accepting chemotaxis proteins or MCP) by CheR. Also mediates the irreversible deamidation of specific glutamine residues to glutamic acid. The sequence is that of Protein-glutamate methylesterase/protein-glutamine glutaminase from Halalkalibacterium halodurans (strain ATCC BAA-125 / DSM 18197 / FERM 7344 / JCM 9153 / C-125) (Bacillus halodurans).